Consider the following 121-residue polypeptide: Large ribosomal subunit protein bL20 (121 aa).

It belongs to the bacterial ribosomal protein bL20 family.

Binds directly to 23S ribosomal RNA and is necessary for the in vitro assembly process of the 50S ribosomal subunit. It is not involved in the protein synthesizing functions of that subunit. In Wolbachia sp. subsp. Drosophila simulans (strain wRi), this protein is Large ribosomal subunit protein bL20.